A 271-amino-acid polypeptide reads, in one-letter code: Formamidopyrimidine-DNA glycosylase (271 aa).

Proline 2 (schiff-base intermediate with DNA) is an active-site residue. Glutamate 3 acts as the Proton donor in catalysis. The active-site Proton donor; for beta-elimination activity is the lysine 58. DNA contacts are provided by histidine 91, arginine 110, and arginine 152. Residues 237–271 (SIYGKKGRPCPKCGSAIRMMRLGGRSTFFCPLCQK) form an FPG-type zinc finger. The active-site Proton donor; for delta-elimination activity is arginine 261.

This sequence belongs to the FPG family. In terms of assembly, monomer. It depends on Zn(2+) as a cofactor.

The enzyme catalyses Hydrolysis of DNA containing ring-opened 7-methylguanine residues, releasing 2,6-diamino-4-hydroxy-5-(N-methyl)formamidopyrimidine.. It catalyses the reaction 2'-deoxyribonucleotide-(2'-deoxyribose 5'-phosphate)-2'-deoxyribonucleotide-DNA = a 3'-end 2'-deoxyribonucleotide-(2,3-dehydro-2,3-deoxyribose 5'-phosphate)-DNA + a 5'-end 5'-phospho-2'-deoxyribonucleoside-DNA + H(+). In terms of biological role, involved in base excision repair of DNA damaged by oxidation or by mutagenic agents. Acts as a DNA glycosylase that recognizes and removes damaged bases. Has a preference for oxidized purines, such as 7,8-dihydro-8-oxoguanine (8-oxoG). Has AP (apurinic/apyrimidinic) lyase activity and introduces nicks in the DNA strand. Cleaves the DNA backbone by beta-delta elimination to generate a single-strand break at the site of the removed base with both 3'- and 5'-phosphates. This chain is Formamidopyrimidine-DNA glycosylase, found in Geotalea daltonii (strain DSM 22248 / JCM 15807 / FRC-32) (Geobacter daltonii).